A 1015-amino-acid chain; its full sequence is MKNNLRYGIRKHKLGAASVFLGTMIVVGMGQDKEAAASEQKTTTVEENGNSATENKVNETQTTTTNVNTIDETQSYSATATEQPSNATQVTTEEAPKAVQAPQTAQPANLETVKEEVVKEEAKPQVKETTQSQDNSGDQRQVDLTPKKATQNQVAETQVEVAQPRTASESKPRVTRSADVVEAKEASDEKVETGTDVTSKVTVESGSIEAPQGNKVEPHAGQRVVLKYKLKFADGLKRGDYFDFTLSNNVNTYGVSTARKVPEIKNGSVVMATGEILGNGNIRYTFTNEIEHKVEVTANLEINLFIDPKTVQSNGEQKITSKLNGEETEKTIPVVYNPGVSNSYTNVNGSIETFNKESNKFTHIAYIKPMNGNQSNTVSVTGTLTEGSNLAGGQPTVKVYEYLGKKDELPQSVYANTSDTNKFKDVTKEMNGKLSVQDNGSYSLNLDKLDKTYVIHYTGEYLQGSDQVNFRTELYGYPERAYKSYYVYGGYRLTWDNGLVLYSNKADGNGKNGQIIQNNDFEYKEDTAKGTMSGQYDAKQIIETEENQDNTPLDIDYHTAIDGEGGYVDGYIETIEETDSSAIDIDYHTAVDSEAGHVGGYTESSEESNPIDFEESTHENSKHHADVVEYEEDTNPGGGQVTTESNLVEFDEESTKGIVTGAVSDHTTIEDTKEYTTESNLIELVDELPEEHGQAQGPIEEITENNHHISHSGLGTENGHGNYGVIEEIEENSHVDIKSELGYEGGQNSGNQSFEEDTEEDKPKYEQGGNIVDIDFDSVPQIQGQNNGNQSFEEDTEKDKPKYEQGGNIIDIDFDSVPQIHGFNKHTEIIEEDTNKDKPNYQFGGHNSVDFEEDTLPKVSGQNEGQQTIEEDTTPPTPPTPEVPSEPETPTPPTPEVPSEPETPTPPTPEVPSEPETPTPPTPEVPAEPGKPVPPAKEEPKKPSKPVEQGKVVTPVIEINEKVKAVAPTKKAQSKKSELPETGGEESTNKGMLFGGLFSILGLALLRRNKKNNKA.

Residues 1 to 36 (MKNNLRYGIRKHKLGAASVFLGTMIVVGMGQDKEAA) form the signal peptide. The YSIRK-G/S signaling motif motif lies at 7-18 (YGIRKHKLGAAS). Positions 37–512 (ASEQKTTTVE…SNKADGNGKN (476 aa)) are ligand-binding A region. The span at 75-92 (SYSATATEQPSNATQVTT) shows a compositional bias: polar residues. Residues 75–199 (SYSATATEQP…KVETGTDVTS (125 aa)) are disordered. Basic and acidic residues predominate over residues 112–126 (TVKEEVVKEEAKPQV). Over residues 129 to 139 (TTQSQDNSGDQ) the composition is skewed to polar residues. Over residues 179–193 (DVVEAKEASDEKVET) the composition is skewed to basic and acidic residues. The interval 194-512 (GTDVTSKVTV…SNKADGNGKN (319 aa)) is fibrinogen/elastin/tropoelastin-binding. The segment at 513-873 (GQIIQNNDFE…EGQQTIEEDT (361 aa)) is fibronectin-binding. One copy of the B-1 repeat lies at 546–575 (ENQDNTPLDIDYHTAIDGEGGYVDGYIETI). The 2 X approximate tandem repeats stretch occupies residues 546-605 (ENQDNTPLDIDYHTAIDGEGGYVDGYIETIEETDSSAIDIDYHTAVDSEAGHVGGYTESS). A B-2 repeat occupies 576–605 (EETDSSAIDIDYHTAVDSEAGHVGGYTESS). Disordered stretches follow at residues 596-623 (GHVG…NSKH), 741-815 (LGYE…IDFD), 828-953 (EIIE…GKVV), and 966-992 (VAPT…NKGM). One copy of the D-1 repeat lies at 746 to 783 (GQNSGNQSFEEDTEEDKPKYEQGGNIVDIDFDSVPQIQ). The tract at residues 746 to 875 (GQNSGNQSFE…QQTIEEDTTP (130 aa)) is 4 X approximate tandem repeats. The segment covering 780–791 (PQIQGQNNGNQS) has biased composition (polar residues). The D-2 repeat unit spans residues 784–821 (GQNNGNQSFEEDTEKDKPKYEQGGNIIDIDFDSVPQIH). Residues 822–860 (GFNKHTEIIEEDTNKDKPNYQFGGHNSVDFEEDTLPKVS) form a D-3 repeat. Positions 828 to 839 (EIIEEDTNKDKP) are enriched in basic and acidic residues. Residues 861-875 (GQNEGQQTIEEDTTP) form a D-4; truncated repeat. Residues 875–935 (PPTPPTPEVP…PAEPGKPVPP (61 aa)) show a composition bias toward pro residues. WR repeat units follow at residues 876-889 (PTPP…EPET), 890-903 (PTPP…EPET), 904-917 (PTPP…EPET), 918-931 (PTPP…EPGK), and 932-945 (PVPP…KPSK). Residues 876–945 (PTPPTPEVPS…AKEEPKKPSK (70 aa)) are 5 X tandem repeats, Pro-rich (WR). The LPXTG sorting signal signature appears at 979–983 (LPETG). Position 982 is a pentaglycyl murein peptidoglycan amidated threonine (Thr-982). Positions 983-1015 (GGEESTNKGMLFGGLFSILGLALLRRNKKNNKA) are cleaved as a propeptide — removed by sortase.

Its subcellular location is the secreted. It localises to the cell wall. Promotes bacterial attachment to multiple substrates, such as fibronectin (Fn), fibrinogen (Fg), elastin peptides and tropoelastin. This confers to S.aureus the ability to invade endothelial cells. Promotes adherence to and aggregation of activated platelets. This chain is Fibronectin-binding protein A (fnbA), found in Staphylococcus aureus (strain MSSA476).